The chain runs to 207 residues: MTTKGILGKKVGMTQVFTENGELVPVTVVKVDSNVVLQVKTMENDGYEAIQLGFDDLREVLTNKPAKGHAAKANTTPKRFVREIRDVELGEYKVGDEVKADIFEAGDFVDVTGTSKGHGFQGSIKRNGQHRGPMAHGSRYHRRPGSMGVIINRVMKGKLLPGRMGGNRVTIQNLEIVKADTENGVLLIKGNVPGANKSLVTIKSTVK.

A disordered region spans residues 119 to 143 (GFQGSIKRNGQHRGPMAHGSRYHRR).

The protein belongs to the universal ribosomal protein uL3 family. Part of the 50S ribosomal subunit. Forms a cluster with proteins L14 and L19.

Its function is as follows. One of the primary rRNA binding proteins, it binds directly near the 3'-end of the 23S rRNA, where it nucleates assembly of the 50S subunit. This chain is Large ribosomal subunit protein uL3, found in Ligilactobacillus salivarius (strain UCC118) (Lactobacillus salivarius).